The chain runs to 103 residues: Large ribosomal subunit protein uL24 (103 aa).

Belongs to the universal ribosomal protein uL24 family. Part of the 50S ribosomal subunit.

One of two assembly initiator proteins, it binds directly to the 5'-end of the 23S rRNA, where it nucleates assembly of the 50S subunit. Its function is as follows. One of the proteins that surrounds the polypeptide exit tunnel on the outside of the subunit. The chain is Large ribosomal subunit protein uL24 from Listeria monocytogenes serotype 4a (strain HCC23).